We begin with the raw amino-acid sequence, 348 residues long: Flavonol synthase/flavanone 3-hydroxylase (348 aa).

The Fe2OG dioxygenase domain maps to 209-309; sequence EIVYLLKINY…RMSWPVFLEP (101 aa). 3 residues coordinate Fe cation: His234, Asp236, and His290.

This sequence belongs to the iron/ascorbate-dependent oxidoreductase family. The cofactor is L-ascorbate. It depends on Fe cation as a cofactor.

The protein resides in the cytoplasm. It carries out the reaction a (2R,3R)-dihydroflavonol + 2-oxoglutarate + O2 = a flavonol + succinate + CO2 + H2O. The enzyme catalyses a (2S)-flavan-4-one + 2-oxoglutarate + O2 = a (2R,3R)-dihydroflavonol + succinate + CO2. Its pathway is secondary metabolite biosynthesis; flavonoid biosynthesis. Its function is as follows. Catalyzes the formation of flavonols from dihydroflavonols. It can act on dihydrokaempferol to produce kaempferol, on dihydroquercetin to produce quercitin and on dihydromyricetin to produce myricetin. The chain is Flavonol synthase/flavanone 3-hydroxylase (FL) from Petunia hybrida (Petunia).